The primary structure comprises 368 residues: Queuine tRNA-ribosyltransferase (368 aa).

The Proton acceptor role is filled by Asp-89. Residues 89–93 (DSGGF), Asp-143, and Gly-216 each bind substrate. The segment at 247–253 (GVGKPED) is RNA binding. The Nucleophile role is filled by Asp-266. Residues 271–275 (TRNAR) form an RNA binding; important for wobble base 34 recognition region. Residues Cys-304, Cys-306, Cys-309, and His-335 each contribute to the Zn(2+) site.

The protein belongs to the queuine tRNA-ribosyltransferase family. As to quaternary structure, homodimer. Within each dimer, one monomer is responsible for RNA recognition and catalysis, while the other monomer binds to the replacement base PreQ1. The cofactor is Zn(2+).

The catalysed reaction is 7-aminomethyl-7-carbaguanine + guanosine(34) in tRNA = 7-aminomethyl-7-carbaguanosine(34) in tRNA + guanine. The protein operates within tRNA modification; tRNA-queuosine biosynthesis. Its function is as follows. Catalyzes the base-exchange of a guanine (G) residue with the queuine precursor 7-aminomethyl-7-deazaguanine (PreQ1) at position 34 (anticodon wobble position) in tRNAs with GU(N) anticodons (tRNA-Asp, -Asn, -His and -Tyr). Catalysis occurs through a double-displacement mechanism. The nucleophile active site attacks the C1' of nucleotide 34 to detach the guanine base from the RNA, forming a covalent enzyme-RNA intermediate. The proton acceptor active site deprotonates the incoming PreQ1, allowing a nucleophilic attack on the C1' of the ribose to form the product. After dissociation, two additional enzymatic reactions on the tRNA convert PreQ1 to queuine (Q), resulting in the hypermodified nucleoside queuosine (7-(((4,5-cis-dihydroxy-2-cyclopenten-1-yl)amino)methyl)-7-deazaguanosine). This is Queuine tRNA-ribosyltransferase from Buchnera aphidicola subsp. Schizaphis graminum (strain Sg).